A 429-amino-acid chain; its full sequence is Threonine synthase (429 aa).

Lysine 108 carries the N6-(pyridoxal phosphate)lysine modification.

It belongs to the threonine synthase family. Pyridoxal 5'-phosphate serves as cofactor.

The catalysed reaction is O-phospho-L-homoserine + H2O = L-threonine + phosphate. The protein operates within amino-acid biosynthesis; L-threonine biosynthesis; L-threonine from L-aspartate: step 5/5. Functionally, catalyzes the gamma-elimination of phosphate from L-phosphohomoserine and the beta-addition of water to produce L-threonine. The protein is Threonine synthase (thrC) of Buchnera aphidicola subsp. Acyrthosiphon pisum (strain APS) (Acyrthosiphon pisum symbiotic bacterium).